The primary structure comprises 181 residues: 3-hexulose-6-phosphate isomerase (181 aa).

One can recognise an SIS domain in the interval 27-168 (ILSLVDAAGR…IAKLVDQKGL (142 aa)). Residues Ser-45 and 84–89 (SGSGST) each bind substrate. Glu-148 serves as the catalytic Proton acceptor.

It belongs to the SIS family. PHI subfamily. As to quaternary structure, homodimer.

It catalyses the reaction D-arabino-hex-3-ulose 6-phosphate = beta-D-fructose 6-phosphate. It functions in the pathway one-carbon metabolism; formaldehyde assimilation via RuMP pathway; D-fructose 6-phosphate from D-ribulose 5-phosphate and formaldehyde: step 2/2. In terms of biological role, catalyzes the isomerization between 3-hexulose 6-phosphate and fructose 6-phosphate. This chain is 3-hexulose-6-phosphate isomerase (rmpB), found in Methylomonas aminofaciens.